A 184-amino-acid polypeptide reads, in one-letter code: MVPMGLTVLSGPSGVGKDTVVAAVRERHPEVWVSVSATTRPPRPGETDGVEYHFVDAEEFARMVKAGEFVEHAMFAGHAYGTPRRPLLERLAAGVPCLLEIELLGARQVRSAMPQARFVFLAPPTFDELVRRLTGRGTESPEVIARRLDRARIELAAETEFDDVIVNDDVRSAAARLVALMIGS.

The region spanning 4-182 (MGLTVLSGPS…AAARLVALMI (179 aa)) is the Guanylate kinase-like domain. 11–18 (GPSGVGKD) contributes to the ATP binding site.

It belongs to the guanylate kinase family.

The protein localises to the cytoplasm. The enzyme catalyses GMP + ATP = GDP + ADP. Essential for recycling GMP and indirectly, cGMP. This chain is Guanylate kinase, found in Frankia casuarinae (strain DSM 45818 / CECT 9043 / HFP020203 / CcI3).